We begin with the raw amino-acid sequence, 219 residues long: Factor in the germline alpha (219 aa).

The bHLH domain maps to 65–117 (ERRRVANAKERERIKNLNRGFARLKALVPFLPQSRKPSKVDILKGATEYIQVL). The tract at residues 124–151 (AKDSKKQDPDEQSYSNNSSESHTSSARQ) is disordered. Residues 136-148 (SYSNNSSESHTSS) show a composition bias toward low complexity.

As to quaternary structure, heterodimer with TCF3/isoform E12. As to expression, germ cells. Expressed in the fetal ovary, but not by a range of other tissues. Expression increases across mid-gestation, rising some 40-fold by the time of primordial follicle formation.

Its subcellular location is the nucleus. Germline specific transcription factor implicated in postnatal oocyte-specific gene expression. Plays a key regulatory role in the expression of multiple oocyte-specific genes, including those that initiate folliculogenesis and those that encode the zona pellucida (ZP1, ZP2 and ZP3) required for fertilization and early embryonic survival. Essential for oocytes to survive and form primordial follicles. The persistence of FIGLA in adult females suggests that it may regulate additional pathways that are essential for normal ovarian development. Binds to the E-box (5'-CANNTG-3') of the ZPs (ZP1, ZP2, ZP3) promoters. The polypeptide is Factor in the germline alpha (FIGLA) (Homo sapiens (Human)).